Here is a 424-residue protein sequence, read N- to C-terminus: Serine--tRNA ligase (424 aa).

Residue 231 to 233 (TAE) coordinates L-serine. ATP contacts are provided by residues 262-264 (RRE) and Val278. Glu285 is an L-serine binding site. 349–352 (EVSS) contacts ATP. Ser384 contributes to the L-serine binding site.

It belongs to the class-II aminoacyl-tRNA synthetase family. Type-1 seryl-tRNA synthetase subfamily. In terms of assembly, homodimer. The tRNA molecule binds across the dimer.

The protein localises to the cytoplasm. It carries out the reaction tRNA(Ser) + L-serine + ATP = L-seryl-tRNA(Ser) + AMP + diphosphate + H(+). The enzyme catalyses tRNA(Sec) + L-serine + ATP = L-seryl-tRNA(Sec) + AMP + diphosphate + H(+). The protein operates within aminoacyl-tRNA biosynthesis; selenocysteinyl-tRNA(Sec) biosynthesis; L-seryl-tRNA(Sec) from L-serine and tRNA(Sec): step 1/1. Its function is as follows. Catalyzes the attachment of serine to tRNA(Ser). Is also able to aminoacylate tRNA(Sec) with serine, to form the misacylated tRNA L-seryl-tRNA(Sec), which will be further converted into selenocysteinyl-tRNA(Sec). In Chlamydia abortus (strain DSM 27085 / S26/3) (Chlamydophila abortus), this protein is Serine--tRNA ligase.